Consider the following 435-residue polypeptide: Enolase (435 aa).

Gln163 lines the (2R)-2-phosphoglycerate pocket. The Proton donor role is filled by Glu205. 3 residues coordinate Mg(2+): Asp243, Glu292, and Asp319. Positions 344, 373, 374, and 395 each coordinate (2R)-2-phosphoglycerate. Lys344 serves as the catalytic Proton acceptor.

It belongs to the enolase family. Mg(2+) is required as a cofactor.

It localises to the cytoplasm. Its subcellular location is the secreted. It is found in the cell surface. It catalyses the reaction (2R)-2-phosphoglycerate = phosphoenolpyruvate + H2O. Its pathway is carbohydrate degradation; glycolysis; pyruvate from D-glyceraldehyde 3-phosphate: step 4/5. Functionally, catalyzes the reversible conversion of 2-phosphoglycerate (2-PG) into phosphoenolpyruvate (PEP). It is essential for the degradation of carbohydrates via glycolysis. The chain is Enolase from Streptococcus equi subsp. zooepidemicus (strain MGCS10565).